A 968-amino-acid chain; its full sequence is MAFANFRRILRLSTFEKRKSREYEHVRRDLDPNEVWEIVGELGDGAFGKVYKAKNKETGALAAAKVIETKSEEELEDYIVEIEILATCDHPYIVKLLGAYYHDGKLWIMIEFCPGGAVDAIMLELDRGLTEPQIQVVCRQMLEALNFLHSKRIIHRDLKAGNVLMTLEGDIRLADFGVSAKNLKTLQKRDSFIGTPYWMAPEVVMCETMKDTPYDYKADIWSLGITLIEMAQIEPPHHELNPMRVLLKIAKSDPPTLLTPSKWSVEFRDFLKIALDKNPETRPSAAQLLEHPFVSSITSNKALRELVAEAKAEVMEEIEDGRDEGEEEDAVDAASTLENHTQNSSEVSPPSLNADKPLEESPSTPLAPSQSQDSVNEPCSQPSGDRSLQTTSPPVVAPGNENGLAVPVPLRKSRPVSMDARIQVAQEKQVAEQGGDLSPAANRSQKASQSRPNSSALETLGGEKLANGSLEPPAQAAPGPSKRDSDCSSLCTSESMDYGTNLSTDLSLNKEMGSLSIKDPKLYKKTLKRTRKFVVDGVEVSITTSKIISEDEKKDEEMRFLRRQELRELRLLQKEEHRNQTQLSNKHELQLEQMHKRFEQEINAKKKFFDTELENLERQQKQQVEKMEQDHAVRRREEARRIRLEQDRDYTRFQEQLKLMKKEVKNEVEKLPRQQRKESMKQKMEEHTQKKQLLDRDFVAKQKEDLELAMKRLTTDNRREICDKERECLMKKQELLRDREAALWEMEEHQLQERHQLVKQQLKDQYFLQRHELLRKHEKEREQMQRYNQRMIEQLKVRQQQEKARLPKIQRSEGKTRMAMYKKSLHINGGGSAAEQREKIKQFSQQEEKRQKSERLQQQQKHENQMRDMLAQCESNMSELQQLQNEKCHLLVEHETQKLKALDESHNQNLKEWRDKLRPRKKALEEDLNQKKREQEMFFKLSEEAECPNPSTPSKAAKFFPYSSADAS.

A phosphoserine mark is found at S13 and S20. In terms of domain architecture, Protein kinase spans 36 to 294 (WEIVGELGDG…AAQLLEHPFV (259 aa)). Residues 42–50 (LGDGAFGKV) and K65 contribute to the ATP site. D157 acts as the Proton acceptor in catalysis. Residues 175–224 (DFGVSAKNLKTLQKRDSFIGTPYWMAPEVVMCETMKDTPYDYKADIWSLG) form an activation segment region. The residue at position 191 (S191) is a Phosphoserine. Composition is skewed to polar residues over residues 337 to 351 (LENH…SPPS) and 361 to 393 (SPST…TTSP). 2 disordered regions span residues 337 to 411 (LENH…VPLR) and 425 to 490 (AQEK…CSSL). S438, S450, S454, S485, S514, and S549 each carry phosphoserine. Residues 441-457 (ANRSQKASQSRPNSSAL) show a composition bias toward polar residues. Residues 573-947 (QKEEHRNQTQ…FFKLSEEAEC (375 aa)) are a coiled coil. 4 disordered regions span residues 668 to 690 (VEKL…HTQK), 827 to 865 (INGG…HENQ), 910 to 929 (LKEW…EDLN), and 944 to 968 (EAEC…ADAS). Basic and acidic residues predominate over residues 835–865 (EQREKIKQFSQQEEKRQKSERLQQQQKHENQ). Position 952 is a phosphothreonine (T952).

Belongs to the protein kinase superfamily. STE Ser/Thr protein kinase family. STE20 subfamily. As to quaternary structure, homodimer; homodimerization is required for activation segment autophosphorylation. In terms of processing, autophosphorylates following homodimerization, leading to activation of the protein. Highly expressed in rapidly proliferating tissues (spleen, placenta, and peripheral blood leukocytes). Also expressed in brain, heart, skeletal muscle, colon, thymus, kidney, liver, small intestine and lung.

The protein resides in the cell membrane. The enzyme catalyses L-seryl-[protein] + ATP = O-phospho-L-seryl-[protein] + ADP + H(+). The catalysed reaction is L-threonyl-[protein] + ATP = O-phospho-L-threonyl-[protein] + ADP + H(+). With respect to regulation, inhibited by the pyrrole-indolinone inhibitor SU11274 (K00593): intercalates between the ATP-binding Lys-65 and alpha-C glutamate (Glu-81), resulting in a partial disordering of the lysine side chain. Also specifically inhibited by erlotinib. Slightly inhibited by gefitinib. In terms of biological role, serine/threonine-protein kinase involved in regulation of lymphocyte migration. Phosphorylates MSN, and possibly PLK1. Involved in regulation of lymphocyte migration by mediating phosphorylation of ERM proteins such as MSN. Acts as a negative regulator of MAP3K1/MEKK1. May also act as a cell cycle regulator by acting as a polo kinase kinase: mediates phosphorylation of PLK1 in vitro; however such data require additional evidences in vivo. The sequence is that of Serine/threonine-protein kinase 10 (STK10) from Homo sapiens (Human).